Reading from the N-terminus, the 368-residue chain is Cystathionine beta-lyase (368 aa).

K221 is modified (N6-(pyridoxal phosphate)lysine).

It belongs to the class-II pyridoxal-phosphate-dependent aminotransferase family. MalY/PatB cystathionine beta-lyase subfamily. Pyridoxal 5'-phosphate is required as a cofactor.

The catalysed reaction is L,L-cystathionine + H2O = L-homocysteine + pyruvate + NH4(+). It carries out the reaction an S-substituted L-cysteine + H2O = a thiol + pyruvate + NH4(+). The protein operates within amino-acid biosynthesis; L-methionine biosynthesis via de novo pathway; L-homocysteine from L-cystathionine: step 1/1. In terms of biological role, catalyzes the transformation of cystathionine to homocysteine. The polypeptide is Cystathionine beta-lyase (metC) (Corynebacterium glutamicum (Brevibacterium saccharolyticum)).